Reading from the N-terminus, the 294-residue chain is Cyclin-dependent kinase A-1 (294 aa).

The region spanning 4 to 287 (YEKEEKIGEG…ARQALEHEYF (284 aa)) is the Protein kinase domain. ATP-binding positions include 10-18 (IGEGTYGVV) and lysine 33. Threonine 14 carries the phosphothreonine modification. Tyrosine 15 carries the post-translational modification Phosphotyrosine. Aspartate 127 serves as the catalytic Proton acceptor. At threonine 161 the chain carries Phosphothreonine; by CAK.

It belongs to the protein kinase superfamily. CMGC Ser/Thr protein kinase family. CDC2/CDKX subfamily. In terms of processing, phosphorylated at Thr-161 by CDKD-1. As to expression, expressed in the dividing region of the root apex and in differentiated cells such as those in the sclerenchyma, pericycle and parenchyma of the central cylinder.

The enzyme catalyses L-seryl-[protein] + ATP = O-phospho-L-seryl-[protein] + ADP + H(+). It catalyses the reaction L-threonyl-[protein] + ATP = O-phospho-L-threonyl-[protein] + ADP + H(+). The catalysed reaction is [DNA-directed RNA polymerase] + ATP = phospho-[DNA-directed RNA polymerase] + ADP + H(+). The protein is Cyclin-dependent kinase A-1 (CDKA-1) of Oryza sativa subsp. japonica (Rice).